A 293-amino-acid chain; its full sequence is Foldase protein PrsA 2 (293 aa).

The N-terminal stretch at 1–20 (MKKKLILGLVMMMALFSLAA) is a signal peptide. Cys21 carries N-palmitoyl cysteine lipidation. The S-diacylglycerol cysteine moiety is linked to residue Cys21. The 92-residue stretch at 135-226 (QPDITVSHIL…YGYHIIQMDK (92 aa)) folds into the PpiC domain.

Belongs to the PrsA family.

It localises to the cell membrane. The catalysed reaction is [protein]-peptidylproline (omega=180) = [protein]-peptidylproline (omega=0). In terms of biological role, plays a major role in protein secretion by helping the post-translocational extracellular folding of several secreted proteins. This is Foldase protein PrsA 2 (prsA2) from Listeria monocytogenes serovar 1/2a (strain ATCC BAA-679 / EGD-e).